The sequence spans 462 residues: Argininosuccinate lyase (462 aa).

The protein belongs to the lyase 1 family. Argininosuccinate lyase subfamily.

It localises to the cytoplasm. The enzyme catalyses 2-(N(omega)-L-arginino)succinate = fumarate + L-arginine. It participates in amino-acid biosynthesis; L-arginine biosynthesis; L-arginine from L-ornithine and carbamoyl phosphate: step 3/3. In Thermus thermophilus (strain ATCC BAA-163 / DSM 7039 / HB27), this protein is Argininosuccinate lyase.